We begin with the raw amino-acid sequence, 234 residues long: MKIIRVQDQIEGGKIAFTLLKDSLAKGAKTLGLATGSSPISFYQEMVKSPLDFSDLTSINLDEYVGLSVESDQSYDYFMRQNLFNGKPFKKNYLPNGLATDVEAEAKRYDQIIAEHPIDFQVLGIGRNGHIGFNEPGTSFEEETHVVDLQESTIEANSRFFTSIEDVPKQAISMGIASIMKSKMIVLLAFGQEKADAIKGMVFGPITEDLPASILQKHDHVIVIVDEAAASQLD.

Catalysis depends on aspartate 62, which acts as the Proton acceptor; for enolization step. Catalysis depends on asparagine 128, which acts as the For ring-opening step. Residue histidine 130 is the Proton acceptor; for ring-opening step of the active site. The For ring-opening step role is filled by glutamate 135.

Belongs to the glucosamine/galactosamine-6-phosphate isomerase family. NagB subfamily.

It carries out the reaction alpha-D-glucosamine 6-phosphate + H2O = beta-D-fructose 6-phosphate + NH4(+). It functions in the pathway amino-sugar metabolism; N-acetylneuraminate degradation; D-fructose 6-phosphate from N-acetylneuraminate: step 5/5. Functionally, catalyzes the reversible isomerization-deamination of glucosamine 6-phosphate (GlcN6P) to form fructose 6-phosphate (Fru6P) and ammonium ion. In Streptococcus pyogenes serotype M49 (strain NZ131), this protein is Glucosamine-6-phosphate deaminase.